Here is a 469-residue protein sequence, read N- to C-terminus: Argininosuccinate lyase (469 aa).

The protein belongs to the lyase 1 family. Argininosuccinate lyase subfamily.

The protein localises to the cytoplasm. The catalysed reaction is 2-(N(omega)-L-arginino)succinate = fumarate + L-arginine. Its pathway is amino-acid biosynthesis; L-arginine biosynthesis; L-arginine from L-ornithine and carbamoyl phosphate: step 3/3. The protein is Argininosuccinate lyase of Burkholderia cenocepacia (strain ATCC BAA-245 / DSM 16553 / LMG 16656 / NCTC 13227 / J2315 / CF5610) (Burkholderia cepacia (strain J2315)).